The chain runs to 290 residues: Pyridoxal kinase PdxY (290 aa).

Substrate contacts are provided by residues S9 and 44–45; that span reads TQ. The ATP site is built by D112, V144, E149, and K182. D221 contacts substrate.

The protein belongs to the pyridoxine kinase family. PdxY subfamily. In terms of assembly, homodimer. Mg(2+) is required as a cofactor.

It carries out the reaction pyridoxal + ATP = pyridoxal 5'-phosphate + ADP + H(+). It functions in the pathway cofactor metabolism; pyridoxal 5'-phosphate salvage; pyridoxal 5'-phosphate from pyridoxal: step 1/1. Functionally, pyridoxal kinase involved in the salvage pathway of pyridoxal 5'-phosphate (PLP). Catalyzes the phosphorylation of pyridoxal to PLP. The chain is Pyridoxal kinase PdxY from Vibrio vulnificus (strain CMCP6).